The sequence spans 1971 residues: Germinal-center associated nuclear protein (1971 aa).

2 disordered regions span residues 1 to 50 (MHPV…KSLA) and 214 to 406 (PAFA…RGKS). Residues 8–29 (GGQQPSAFAVSSSTTGTYQTKS) are compositionally biased toward polar residues. The residue at position 32 (Arg32) is an Asymmetric dimethylarginine. The FG-repeats stretch occupies residues 33–335 (FGQPSLFGQN…RPRGGTLFGR (303 aa)). Composition is skewed to polar residues over residues 38–50 (LFGQNSTPSKSLA) and 214–224 (PAFASPLSNQN). The segment covering 232–253 (STSAFGSSNSSFSTFPTASPGS) has biased composition (low complexity). Basic and acidic residues-rich tracts occupy residues 288–321 (RKEDQDRSPRRHCHEAAEDPDPLSRGDHPPDKRP) and 342–359 (KSNKEAGRLGSKESKESG). Positions 414–550 (EEWIYSLGGV…AAGSLLSKSS (137 aa)) are DNA primase. At Ser424 the chain carries Phosphoserine. N6-acetyllysine occurs at positions 483 and 484. 3 positions are modified to phosphoserine: Ser502, Ser531, and Ser550. The 184-residue stretch at 768–951 (NNENMTKCLQ…RKSVFIGRKL (184 aa)) folds into the PCI domain. The stretch at 1124 to 1162 (HVAAEEVSMERQRLEEEKQRAEEERLKQERELMLTQLSE) forms a coiled coil. The tract at residues 1793–1840 (RELQLSHGRSGMRSIHPPTSTFPTPLLHVHQKGKKKEESGREGSLSTE) is disordered.

The protein belongs to the SAC3 family. As to quaternary structure, component of the nuclear pore complex (NPC)-associated TREX-2 complex (transcription and export complex 2), composed of at least GANP, 2 copies of ENY2, PCID2, SEM1/DSS1, and either centrin CETN2 or centrin CETN3. The TREX-2 complex also associates with ALYREF/ALY. Interacts with RNA polymerase II subunit POLR2A and with the transcription elongation factor SUPT5H/SPT5. Interacts (via FG-repeats) with NXF1; this interaction is not mediated by RNA. Interacts with nuclear envelope proteins NUP62, NUP153 and RANBP2/NUP358; interaction with NUP153 is required for full localization at the nuclear pore complex. Interacts with several RNA helicases, including DHX9, DDX21, and DDX39A/DDX39, and with DNA topoisomerase TOP2A. Directly interacts with AICDA/AID. Interacts with the glucocorticoid receptor NR3C1. Interacts with MCM3. Post-translationally, phosphorylation at Ser-502 is induced in B-cells by CD40-stimulation, but not by bacterial lipopolysaccharide (LPS). As to expression, expressed at low levels in lymphoid organs, including thymus, spleen and lymph nodes. Up-regulated in stimulated B-cells in spleen and Peyer's patch germinal centers (at protein level).

It localises to the cytoplasm. Its subcellular location is the nucleus. The protein localises to the nucleus envelope. The protein resides in the nuclear pore complex. It is found in the nucleoplasm. It localises to the chromosome. It carries out the reaction L-lysyl-[histone] + acetyl-CoA = N(6)-acetyl-L-lysyl-[histone] + CoA + H(+). Its function is as follows. As a component of the TREX-2 complex, involved in the export of mRNAs to the cytoplasm through the nuclear pores. Through the acetylation of histones, affects the assembly of nucleosomes at immunoglobulin variable region genes and promotes the recruitment and positioning of transcription complex to favor DNA cytosine deaminase AICDA/AID targeting, hence promoting somatic hypermutations. This chain is Germinal-center associated nuclear protein (Mcm3ap), found in Mus musculus (Mouse).